The following is a 347-amino-acid chain: NADH-ubiquinone oxidoreductase chain 2 (347 aa).

Transmembrane regions (helical) follow at residues 1–21 (MNPIVFSTILTTAIMGTMIVM), 25–45 (HWLMIWIGFEMNLLAIIPILM), 60–80 (FLTQATASMLLMMAIIINLMF), 89–109 (IFNPTASIIMTSALIMKLGLS), 111–131 (FHFWVPEVTQGIPLVSGLILL), 149–169 (INLDMLMTSALLSILVGGWGG), 178–198 (IMAYSSIAHMGWMTAILTYNP), 201–221 (TALNMLIYIMMTLTTFMLFML), 242–262 (SLILITMLSLGGLPPLSGFIP), 274–294 (DSIILPTSMAIMALLNLYFYM), and 323–343 (MNFLPTLIIMSTLLLPLTPIM).

The protein belongs to the complex I subunit 2 family. In terms of assembly, core subunit of respiratory chain NADH dehydrogenase (Complex I) which is composed of 45 different subunits. Interacts with TMEM242.

It localises to the mitochondrion inner membrane. It carries out the reaction a ubiquinone + NADH + 5 H(+)(in) = a ubiquinol + NAD(+) + 4 H(+)(out). In terms of biological role, core subunit of the mitochondrial membrane respiratory chain NADH dehydrogenase (Complex I) which catalyzes electron transfer from NADH through the respiratory chain, using ubiquinone as an electron acceptor. Essential for the catalytic activity and assembly of complex I. This chain is NADH-ubiquinone oxidoreductase chain 2, found in Ceratotherium simum (White rhinoceros).